The primary structure comprises 231 residues: Sec-independent protein translocase protein TatB (231 aa).

Residues 1–21 (MFDIGFSELLLFGVIALIVLG) traverse the membrane as a helical segment. The interval 77–168 (MRREMAEMRG…SLKTDFNDNA (92 aa)) is disordered. Over residues 101 to 111 (ASRDLVDDAKP) the composition is skewed to basic and acidic residues. Over residues 148-157 (SEQPSAQGDN) the composition is skewed to polar residues.

Belongs to the TatB family. As to quaternary structure, the Tat system comprises two distinct complexes: a TatABC complex, containing multiple copies of TatA, TatB and TatC subunits, and a separate TatA complex, containing only TatA subunits. Substrates initially bind to the TatABC complex, which probably triggers association of the separate TatA complex to form the active translocon.

The protein resides in the cell inner membrane. Its function is as follows. Part of the twin-arginine translocation (Tat) system that transports large folded proteins containing a characteristic twin-arginine motif in their signal peptide across membranes. Together with TatC, TatB is part of a receptor directly interacting with Tat signal peptides. TatB may form an oligomeric binding site that transiently accommodates folded Tat precursor proteins before their translocation. The sequence is that of Sec-independent protein translocase protein TatB from Psychrobacter cryohalolentis (strain ATCC BAA-1226 / DSM 17306 / VKM B-2378 / K5).